The primary structure comprises 441 residues: Ribosomal protein uS12 methylthiotransferase RimO (441 aa).

The 111-residue stretch at 8-118 (PKIGFVSLGC…VLEHVHHYVP (111 aa)) folds into the MTTase N-terminal domain. Residues Cys17, Cys53, Cys82, Cys150, Cys154, and Cys157 each coordinate [4Fe-4S] cluster. Residues 136–373 (LTPRHYAYLK…MQLQQQISAE (238 aa)) form the Radical SAM core domain. In terms of domain architecture, TRAM spans 376 to 441 (QEKVGREILV…DEYDLWGSRV (66 aa)).

Belongs to the methylthiotransferase family. RimO subfamily. Requires [4Fe-4S] cluster as cofactor.

It is found in the cytoplasm. It carries out the reaction L-aspartate(89)-[ribosomal protein uS12]-hydrogen + (sulfur carrier)-SH + AH2 + 2 S-adenosyl-L-methionine = 3-methylsulfanyl-L-aspartate(89)-[ribosomal protein uS12]-hydrogen + (sulfur carrier)-H + 5'-deoxyadenosine + L-methionine + A + S-adenosyl-L-homocysteine + 2 H(+). In terms of biological role, catalyzes the methylthiolation of an aspartic acid residue of ribosomal protein uS12. In Citrobacter koseri (strain ATCC BAA-895 / CDC 4225-83 / SGSC4696), this protein is Ribosomal protein uS12 methylthiotransferase RimO.